A 528-amino-acid chain; its full sequence is Na(+)/H(+) antiporter NhaB (528 aa).

A run of 11 helical transmembrane segments spans residues 23 to 45 (FAIL…VAGW), 66 to 86 (PGGL…SQVL), 95 to 115 (VLLL…LLLF), 139 to 159 (AFLS…AVAV), 203 to 223 (LLMH…VGEP), 241 to 261 (LRMS…CFLV), 310 to 330 (LIIG…SVII), 349 to 369 (EEAL…GVII), 390 to 410 (LVIF…VFVG), 448 to 468 (ATPN…APLI), and 476 to 496 (VWMA…AIQF).

This sequence belongs to the NhaB Na(+)/H(+) (TC 2.A.34) antiporter family.

It is found in the cell inner membrane. The enzyme catalyses 2 Na(+)(in) + 3 H(+)(out) = 2 Na(+)(out) + 3 H(+)(in). Its function is as follows. Na(+)/H(+) antiporter that extrudes sodium in exchange for external protons. In Shewanella piezotolerans (strain WP3 / JCM 13877), this protein is Na(+)/H(+) antiporter NhaB.